The sequence spans 373 residues: Citrate synthase (373 aa).

Catalysis depends on residues His-262 and Asp-314.

The protein belongs to the citrate synthase family. Homohexamer.

The catalysed reaction is oxaloacetate + acetyl-CoA + H2O = citrate + CoA + H(+). Its pathway is carbohydrate metabolism; tricarboxylic acid cycle; isocitrate from oxaloacetate: step 1/2. The polypeptide is Citrate synthase (ctsA) (Heyndrickxia coagulans (Weizmannia coagulans)).